The chain runs to 728 residues: Protein psiK (728 aa).

A signal peptide spans 1 to 20 (MKKTFIFLYCVVLFISTTLA). The Extracellular portion of the chain corresponds to 21 to 666 (VEMKKTQDFN…FICKTAAVVS (646 aa)). 3 N-linked (GlcNAc...) asparagine glycosylation sites follow: asparagine 61, asparagine 74, and asparagine 104. One can recognise a PA14 domain in the interval 118–266 (MNLDDKSNYF…YDFCGVCTGN (149 aa)). 6 N-linked (GlcNAc...) asparagine glycosylation sites follow: asparagine 272, asparagine 326, asparagine 335, asparagine 438, asparagine 543, and asparagine 638. Residues 667-687 (VGVAVGVAVGGAIALGVFIFA) form a helical membrane-spanning segment. At 688–728 (GKKGYDYWKASQGVTMATSNANPLYESNPSGGENPIYTSPN) the chain is on the cytoplasmic side.

The protein belongs to the prespore-cell-inducing factor family.

It is found in the membrane. The polypeptide is Protein psiK (psiK) (Dictyostelium discoideum (Social amoeba)).